The chain runs to 222 residues: Uracil-DNA glycosylase (222 aa).

Catalysis depends on Asp66, which acts as the Proton acceptor.

The protein belongs to the uracil-DNA glycosylase (UDG) superfamily. UNG family.

It localises to the cytoplasm. It carries out the reaction Hydrolyzes single-stranded DNA or mismatched double-stranded DNA and polynucleotides, releasing free uracil.. Excises uracil residues from the DNA which can arise as a result of misincorporation of dUMP residues by DNA polymerase or due to deamination of cytosine. This chain is Uracil-DNA glycosylase, found in Porphyromonas gingivalis (strain ATCC BAA-308 / W83).